Reading from the N-terminus, the 577-residue chain is Dihydroxy-acid dehydratase (577 aa).

The segment covering 1–10 (MLKRSFDKSK) has biased composition (basic and acidic residues). The disordered stretch occupies residues 1-22 (MLKRSFDKSKLPSRHVTEGPSR). Cysteine 56 is a binding site for [2Fe-2S] cluster. Position 88 (aspartate 88) interacts with Mg(2+). Position 129 (cysteine 129) interacts with [2Fe-2S] cluster. The Mg(2+) site is built by aspartate 130 and lysine 131. Lysine 131 carries the N6-carboxylysine modification. Cysteine 201 lines the [2Fe-2S] cluster pocket. Glutamate 453 lines the Mg(2+) pocket. Residue serine 479 is the Proton acceptor of the active site.

This sequence belongs to the IlvD/Edd family. In terms of assembly, homodimer. [2Fe-2S] cluster is required as a cofactor. The cofactor is Mg(2+).

It catalyses the reaction (2R)-2,3-dihydroxy-3-methylbutanoate = 3-methyl-2-oxobutanoate + H2O. It carries out the reaction (2R,3R)-2,3-dihydroxy-3-methylpentanoate = (S)-3-methyl-2-oxopentanoate + H2O. It functions in the pathway amino-acid biosynthesis; L-isoleucine biosynthesis; L-isoleucine from 2-oxobutanoate: step 3/4. The protein operates within amino-acid biosynthesis; L-valine biosynthesis; L-valine from pyruvate: step 3/4. In terms of biological role, functions in the biosynthesis of branched-chain amino acids. Catalyzes the dehydration of (2R,3R)-2,3-dihydroxy-3-methylpentanoate (2,3-dihydroxy-3-methylvalerate) into 2-oxo-3-methylpentanoate (2-oxo-3-methylvalerate) and of (2R)-2,3-dihydroxy-3-methylbutanoate (2,3-dihydroxyisovalerate) into 2-oxo-3-methylbutanoate (2-oxoisovalerate), the penultimate precursor to L-isoleucine and L-valine, respectively. The chain is Dihydroxy-acid dehydratase from Dinoroseobacter shibae (strain DSM 16493 / NCIMB 14021 / DFL 12).